A 643-amino-acid chain; its full sequence is Lysophospholipase ARB_05919 (643 aa).

The first 22 residues, 1–22 (MMFIPATLGTFVLASLLPATVG), serve as a signal peptide directing secretion. The region spanning 50–597 (DCPSTKPAVR…KMYCWDGTLN (548 aa)) is the PLA2c domain. Residues Asn-142, Asn-176, Asn-195, Asn-293, Asn-466, Asn-472, Asn-482, Asn-503, Asn-524, Asn-533, Asn-552, and Asn-597 are each glycosylated (N-linked (GlcNAc...) asparagine).

It belongs to the lysophospholipase family.

It localises to the secreted. It catalyses the reaction a 1-acyl-sn-glycero-3-phosphocholine + H2O = sn-glycerol 3-phosphocholine + a fatty acid + H(+). Functionally, catalyzes the release of fatty acids from lysophospholipids. Phospholipase B may well contribute to pathogenicity by abetting the fungus in damaging host cell membranes. This chain is Lysophospholipase ARB_05919, found in Arthroderma benhamiae (strain ATCC MYA-4681 / CBS 112371) (Trichophyton mentagrophytes).